The sequence spans 355 residues: Phosphoribosylformylglycinamidine cyclo-ligase (355 aa).

It belongs to the AIR synthase family.

The protein localises to the cytoplasm. The catalysed reaction is 2-formamido-N(1)-(5-O-phospho-beta-D-ribosyl)acetamidine + ATP = 5-amino-1-(5-phospho-beta-D-ribosyl)imidazole + ADP + phosphate + H(+). It participates in purine metabolism; IMP biosynthesis via de novo pathway; 5-amino-1-(5-phospho-D-ribosyl)imidazole from N(2)-formyl-N(1)-(5-phospho-D-ribosyl)glycinamide: step 2/2. This chain is Phosphoribosylformylglycinamidine cyclo-ligase, found in Beijerinckia indica subsp. indica (strain ATCC 9039 / DSM 1715 / NCIMB 8712).